The sequence spans 143 residues: Small ribosomal subunit protein uS9 (143 aa).

The interval 123–143 (RPEPKKFGGRGARARFQKSYR) is disordered. Over residues 134-143 (ARARFQKSYR) the composition is skewed to basic residues.

It belongs to the universal ribosomal protein uS9 family.

This Eremothecium gossypii (strain ATCC 10895 / CBS 109.51 / FGSC 9923 / NRRL Y-1056) (Yeast) protein is Small ribosomal subunit protein uS9 (RPS16).